A 385-amino-acid polypeptide reads, in one-letter code: Chaperone protein DnaJ (385 aa).

Residues 5–70 form the J domain; that stretch reads DYYEVLGVAK…QKRAAYDRFG (66 aa). The segment at 141–219 adopts a CR-type zinc-finger fold; that stretch reads GKTETIRIPT…CSGAGRVNRE (79 aa). Residues C154, C157, C171, C174, C193, C196, C207, and C210 each contribute to the Zn(2+) site. CXXCXGXG motif repeat units lie at residues 154–161, 171–178, 193–200, and 207–214; these read CETCSGTG, CSTCGGYG, CPNCHGRG, and CTACSGAG.

This sequence belongs to the DnaJ family. In terms of assembly, homodimer. Zn(2+) serves as cofactor.

The protein resides in the cytoplasm. In terms of biological role, participates actively in the response to hyperosmotic and heat shock by preventing the aggregation of stress-denatured proteins and by disaggregating proteins, also in an autonomous, DnaK-independent fashion. Unfolded proteins bind initially to DnaJ; upon interaction with the DnaJ-bound protein, DnaK hydrolyzes its bound ATP, resulting in the formation of a stable complex. GrpE releases ADP from DnaK; ATP binding to DnaK triggers the release of the substrate protein, thus completing the reaction cycle. Several rounds of ATP-dependent interactions between DnaJ, DnaK and GrpE are required for fully efficient folding. Also involved, together with DnaK and GrpE, in the DNA replication of plasmids through activation of initiation proteins. This chain is Chaperone protein DnaJ, found in Methylorubrum extorquens (strain PA1) (Methylobacterium extorquens).